We begin with the raw amino-acid sequence, 113 residues long: UPF0482 protein YnfB (113 aa).

Residues 1 to 28 form the signal peptide; the sequence is MNNTLSKRLCLTAMLTLAAVVYTTSAFA.

The protein belongs to the UPF0482 family.

This Salmonella agona (strain SL483) protein is UPF0482 protein YnfB.